Consider the following 137-residue polypeptide: Small ribosomal subunit protein uS9c (137 aa).

The tract at residues 106-137 (KSEGYLTRDPRVKERKKYGLKKARKAPQFSKR) is disordered. Residues 118–137 (KERKKYGLKKARKAPQFSKR) are compositionally biased toward basic residues.

It belongs to the universal ribosomal protein uS9 family.

The protein resides in the plastid. It is found in the chloroplast. The chain is Small ribosomal subunit protein uS9c (rps9) from Pyropia yezoensis (Susabi-nori).